The primary structure comprises 140 residues: uncharacterized protein (140 aa).

This is an uncharacterized protein from Fowlpox virus (strain NVSL) (FPV).